A 544-amino-acid polypeptide reads, in one-letter code: MIFGELRRLYLIIGVMLSYGLDELIPKTRLTLPLRLGRNLLFWMPNNHAQRMLGERLRLALQELGPVWIKFGQMLSTRRDLFPPAIADQLAMLQDRVQPFDGALARAHIERSMGQPLETWFDDFQQEPLASASIAQVHTARLKNGQEVVIKVIRPDILPMIKADMRLMYRLASWVPHLLPDGRRLRPVEVVLEYEKTLLDELNLLREAANAIQLRRNFDGSPMLYIPEVYPDYCSETMMVMERIYGVPVNDVAALEKQGTNMKLLAERGVQVFFTQVFRDSFFHGDMHPGNIFVSFEHPENPQYIGIDCGIVGSLNKEDKRYLAENFIAFFNRDYRKVAELHVDSGWVPPDTNVEDFEFAIRTVCEPIFEKPLAEISFGHVLLNLFNTARRFNMEVQPQLVLLQKTLLYIEGVGRQLYPQLDLWKTAKPFLEEWIKDQMGLPAILRALKEKAPYWAEKLPELPELVYDGFKQHRLLQKSVDRLTVEMRVHHVRQSQSRFLFGIGATLLLIGTFLMTQGADEGSLPAWLMAAGTVSWIIGWKRTA.

Residues 1–21 (MIFGELRRLYLIIGVMLSYGL) form a helical membrane-spanning segment. The Protein kinase domain occupies 123–500 (DFQQEPLASA…HVRQSQSRFL (378 aa)). ATP contacts are provided by residues 129 to 137 (LASASIAQV) and Lys151. Asp286 acts as the Proton acceptor in catalysis. 2 helical membrane passes run 499–519 (FLFG…TQGA) and 520–540 (DEGS…IIGW).

This sequence belongs to the ABC1 family. UbiB subfamily.

The protein resides in the cell inner membrane. The protein operates within cofactor biosynthesis; ubiquinone biosynthesis [regulation]. Is probably a protein kinase regulator of UbiI activity which is involved in aerobic coenzyme Q (ubiquinone) biosynthesis. The polypeptide is Probable protein kinase UbiB (Sodalis glossinidius (strain morsitans)).